The primary structure comprises 137 residues: Large ribosomal subunit protein uL16 (137 aa).

The protein belongs to the universal ribosomal protein uL16 family. As to quaternary structure, part of the 50S ribosomal subunit.

Functionally, binds 23S rRNA and is also seen to make contacts with the A and possibly P site tRNAs. The polypeptide is Large ribosomal subunit protein uL16 (Chelativorans sp. (strain BNC1)).